We begin with the raw amino-acid sequence, 474 residues long: Salutaridinol 7-O-acetyltransferase (474 aa).

The active-site Proton acceptor is His-163. A disordered region spans residues 213 to 234 (ERLTSPSGMSEIPFSSTPEDTE). Residues 214-230 (RLTSPSGMSEIPFSSTP) show a composition bias toward polar residues. The active-site Proton acceptor is the Asp-416.

Belongs to the plant acyltransferase family. In terms of tissue distribution, expressed in root, stem, leaf and capsule of the mature plant. Restricted to sieve elements of the phloem adjacent or proximal to laticifers.

The enzyme catalyses (7S)-salutaridinol + acetyl-CoA = (7S)-O-acetylsalutaridinol + CoA. Its pathway is alkaloid biosynthesis; morphine biosynthesis. Functionally, acetyltransferase involved in biosynthesis of morphinan-type benzylisoquinoline and opiate alkaloids natural products. Catalyzes the conversion of the phenanthrene alkaloid salutaridinol to salutaridinol-7-O-acetate, the immediate precursor of thebaine along the morphine biosynthetic pathway. Conversion of 7-O-acetylsalutaridinol into thebaine is spontaneous. The protein is Salutaridinol 7-O-acetyltransferase of Papaver somniferum (Opium poppy).